Reading from the N-terminus, the 520-residue chain is Maturase K (520 aa).

The protein belongs to the intron maturase 2 family. MatK subfamily.

The protein resides in the plastid. Its subcellular location is the chloroplast. Usually encoded in the trnK tRNA gene intron. Probably assists in splicing its own and other chloroplast group II introns. The sequence is that of Maturase K from Cycas taitungensis (Prince sago).